We begin with the raw amino-acid sequence, 406 residues long: Interactor protein for cytohesin exchange factors 1 (406 aa).

Residues 13 to 112 (HADCQGWLYK…WLNKLGFAVT (100 aa)) enclose the PH domain. Disordered stretches follow at residues 118-173 (TKDE…FSSL), 228-285 (CRVS…EDDE), and 383-406 (PQDP…ENSL). Residues 123-134 (CYSESEQEDPET) are compositionally biased toward acidic residues. The segment covering 144 to 160 (ASATSSPVAARRASSSS) has biased composition (low complexity). The span at 228 to 239 (CRVSENSSTTPE) shows a compositional bias: polar residues. A compositionally biased stretch (low complexity) spans 243 to 259 (LNSLSSDDTSSLNNSQD). The segment covering 272–285 (MTDRDEIKSSEDDE) has biased composition (basic and acidic residues). The interval 285 to 406 (EMEKLYKSLE…TSSDCVENSL (122 aa)) is necessary for interaction with PSCD2 and to translocate to the plasma membrane. Residues 392–406 (EIMNPTSSDCVENSL) are compositionally biased toward polar residues.

In terms of assembly, interacts with guanine-nucleotide exchange factors PSCD1, PSCD2, PSCD3 and PSCD4. Expressed in brain, spleen, lung, testis and kidney.

Its subcellular location is the cytoplasm. The protein localises to the cell membrane. In terms of biological role, enhances the promotion of guanine-nucleotide exchange by PSCD2 on ARF6 in a concentration-dependent manner. The polypeptide is Interactor protein for cytohesin exchange factors 1 (Ipcef1) (Rattus norvegicus (Rat)).